The primary structure comprises 78 residues: Small ribosomal subunit protein bS18 (78 aa).

Belongs to the bacterial ribosomal protein bS18 family. In terms of assembly, part of the 30S ribosomal subunit. Forms a tight heterodimer with protein bS6.

Its function is as follows. Binds as a heterodimer with protein bS6 to the central domain of the 16S rRNA, where it helps stabilize the platform of the 30S subunit. This is Small ribosomal subunit protein bS18 from Frankia casuarinae (strain DSM 45818 / CECT 9043 / HFP020203 / CcI3).